We begin with the raw amino-acid sequence, 230 residues long: 5'-methylthioadenosine/S-adenosylhomocysteine nucleosidase (230 aa).

Glu12 serves as the catalytic Proton acceptor. Substrate contacts are provided by residues Gly78, Ile153, and 174–175; that span reads ME. Asp198 acts as the Proton donor in catalysis.

Belongs to the PNP/UDP phosphorylase family. MtnN subfamily.

It carries out the reaction S-adenosyl-L-homocysteine + H2O = S-(5-deoxy-D-ribos-5-yl)-L-homocysteine + adenine. It catalyses the reaction S-methyl-5'-thioadenosine + H2O = 5-(methylsulfanyl)-D-ribose + adenine. The catalysed reaction is 5'-deoxyadenosine + H2O = 5-deoxy-D-ribose + adenine. It participates in amino-acid biosynthesis; L-methionine biosynthesis via salvage pathway; S-methyl-5-thio-alpha-D-ribose 1-phosphate from S-methyl-5'-thioadenosine (hydrolase route): step 1/2. Functionally, catalyzes the irreversible cleavage of the glycosidic bond in both 5'-methylthioadenosine (MTA) and S-adenosylhomocysteine (SAH/AdoHcy) to adenine and the corresponding thioribose, 5'-methylthioribose and S-ribosylhomocysteine, respectively. Also cleaves 5'-deoxyadenosine, a toxic by-product of radical S-adenosylmethionine (SAM) enzymes, into 5-deoxyribose and adenine. This chain is 5'-methylthioadenosine/S-adenosylhomocysteine nucleosidase, found in Shewanella loihica (strain ATCC BAA-1088 / PV-4).